The following is a 631-amino-acid chain: Mitochondrial Rho GTPase (631 aa).

At 1–605 (MRAGRVRPLR…TQADLKSSTF (605 aa)) the chain is on the cytoplasmic side. Residues 15–181 (KKDVRILLVG…FYYAQKAVLH (167 aa)) enclose the Miro 1 domain. GTP is bound by residues arginine 27, glycine 29, lysine 30, threonine 31, and serine 32. Threonine 31 is a binding site for Mg(2+). Aspartate 70 is a binding site for Mg(2+). GTP is bound at residue serine 72. Position 105 is an N6-acetyllysine (lysine 105). Residues asparagine 131, lysine 132, aspartate 134, alanine 162, and lysine 163 each coordinate GTP. Lysine 166 participates in a covalent cross-link: Glycyl lysine isopeptide (Lys-Gly) (interchain with G-Cter in ubiquitin). The EF-hand 1 domain maps to 197–232 (ACIKALTRIFKISDQDNDGTLNDAELNFFQRICFNT). The Ca(2+) site is built by aspartate 210, aspartate 212, aspartate 214, threonine 216, and glutamate 221. Lysine 248 is covalently cross-linked (Glycyl lysine isopeptide (Lys-Gly) (interchain with G-Cter in ubiquitin)). The region spanning 317–352 (HAYLFLQSTFDKHDLDRDCALSPDELKDLFQVFPYI) is the EF-hand 2 domain. Ca(2+)-binding residues include aspartate 330, aspartate 332, aspartate 334, alanine 336, and glutamate 341. The Miro 2 domain maps to 429–592 (RNVFRCNVIG…FVKLTTMAMY (164 aa)). GTP is bound by residues glycine 441, cysteine 442, glycine 443, lysine 444, threonine 445, glycine 446, lysine 460, lysine 541, aspartate 543, threonine 571, and cysteine 572. Glycine 441 is a Mg(2+) binding site. Lysine 585 is covalently cross-linked (Glycyl lysine isopeptide (Lys-Gly) (interchain with G-Cter in ubiquitin)). A helical; Anchor for type IV membrane protein transmembrane segment spans residues 606-628 (WLRASFGATVFAVVGFAMYRALL). The Mitochondrial intermembrane portion of the chain corresponds to 629-631 (KQR).

Belongs to the mitochondrial Rho GTPase family. In terms of assembly, homodimer. Interacts with the kinesin-binding proteins TRAK1/OIP106 and TRAK2/GRIF1, forming a link between mitochondria and the trafficking apparatus of the microtubules. Interacts with RAP1GDS1. Interacts with ARMCX1. Found in a complex with KIF5B, OGT, RHOT2 and TRAK1. Ubiquitinated by PRKN during mitophagy, leading to its degradation and enhancement of mitophagy. Deubiquitinated by USP30. In terms of processing, acetylation on Lys-105 decreases sensitivity of mitochondrial transport to elevated Ca(2+) levels, increases mitochondrial transport and promotes axon growth. Deacetylated by HDAC6 which blocks mitochondrial transport and mediates axon growth inhibition.

It localises to the mitochondrion outer membrane. The enzyme catalyses GTP + H2O = GDP + phosphate + H(+). The catalysed reaction is ATP + H2O = ADP + phosphate + H(+). It carries out the reaction UTP + H2O = UDP + phosphate + H(+). Atypical mitochondrial nucleoside-triphosphatase (NTPase) involved in mitochondrial trafficking. Probably involved in control of anterograde transport of mitochondria and their subcellular distribution. Promotes mitochondrial fission during high calcium conditions. Can hydrolyze GTP, ATP and UTP. The polypeptide is Mitochondrial Rho GTPase (Rattus norvegicus (Rat)).